The following is a 252-amino-acid chain: Hydroxyacylglutathione hydrolase (252 aa).

Residues histidine 54, histidine 56, aspartate 58, histidine 59, histidine 113, aspartate 132, and histidine 170 each contribute to the Zn(2+) site.

The protein belongs to the metallo-beta-lactamase superfamily. Glyoxalase II family. Monomer. The cofactor is Zn(2+).

It catalyses the reaction an S-(2-hydroxyacyl)glutathione + H2O = a 2-hydroxy carboxylate + glutathione + H(+). It participates in secondary metabolite metabolism; methylglyoxal degradation; (R)-lactate from methylglyoxal: step 2/2. Functionally, thiolesterase that catalyzes the hydrolysis of S-D-lactoyl-glutathione to form glutathione and D-lactic acid. This chain is Hydroxyacylglutathione hydrolase, found in Thermosynechococcus vestitus (strain NIES-2133 / IAM M-273 / BP-1).